The primary structure comprises 161 residues: Large ribosomal subunit protein uL15 (161 aa).

The tract at residues 1-41 is disordered; it reads MTKLNELAPAPGSTKGRMRVGRGPGSGKGKTAGRGVKGQKA. Residues 22–36 show a composition bias toward gly residues; the sequence is RGPGSGKGKTAGRGV.

Belongs to the universal ribosomal protein uL15 family. In terms of assembly, part of the 50S ribosomal subunit.

Binds to the 23S rRNA. In Caulobacter sp. (strain K31), this protein is Large ribosomal subunit protein uL15.